We begin with the raw amino-acid sequence, 161 residues long: 6,7-dimethyl-8-ribityllumazine synthase (161 aa).

5-amino-6-(D-ribitylamino)uracil contacts are provided by residues Trp-31, 65–67 (TFE), and 89–91 (CVV). Residue 94–95 (DT) participates in (2S)-2-hydroxy-3-oxobutyl phosphate binding. His-97 functions as the Proton donor in the catalytic mechanism. Phe-122 contacts 5-amino-6-(D-ribitylamino)uracil. Arg-136 provides a ligand contact to (2S)-2-hydroxy-3-oxobutyl phosphate.

The protein belongs to the DMRL synthase family.

It catalyses the reaction (2S)-2-hydroxy-3-oxobutyl phosphate + 5-amino-6-(D-ribitylamino)uracil = 6,7-dimethyl-8-(1-D-ribityl)lumazine + phosphate + 2 H2O + H(+). The protein operates within cofactor biosynthesis; riboflavin biosynthesis; riboflavin from 2-hydroxy-3-oxobutyl phosphate and 5-amino-6-(D-ribitylamino)uracil: step 1/2. Functionally, catalyzes the formation of 6,7-dimethyl-8-ribityllumazine by condensation of 5-amino-6-(D-ribitylamino)uracil with 3,4-dihydroxy-2-butanone 4-phosphate. This is the penultimate step in the biosynthesis of riboflavin. The protein is 6,7-dimethyl-8-ribityllumazine synthase of Porphyromonas gingivalis (strain ATCC 33277 / DSM 20709 / CIP 103683 / JCM 12257 / NCTC 11834 / 2561).